Consider the following 137-residue polypeptide: Chaperone protein YscB (137 aa).

In terms of assembly, interacts with SycN to form a complex which specifically binds to YopN.

The protein resides in the cytoplasm. Its subcellular location is the cell inner membrane. Functionally, functions as a specific chaperone for YopN. It could facilitate the secretion and the subsequent translocation of YopN. This chain is Chaperone protein YscB (yscB), found in Yersinia enterocolitica serotype O:8 / biotype 1B (strain NCTC 13174 / 8081).